The chain runs to 641 residues: Threonine--tRNA ligase (641 aa).

One can recognise a TGS domain in the interval 1–61 (MPAITLPDGS…DDDVQLEIVT (61 aa)). Residues 242–533 (DHRRIGRAQN…LIEHYAGALP (292 aa)) are catalytic. The Zn(2+) site is built by Cys333, His384, and His510.

The protein belongs to the class-II aminoacyl-tRNA synthetase family. As to quaternary structure, homodimer. The cofactor is Zn(2+).

The protein resides in the cytoplasm. The catalysed reaction is tRNA(Thr) + L-threonine + ATP = L-threonyl-tRNA(Thr) + AMP + diphosphate + H(+). Its function is as follows. Catalyzes the attachment of threonine to tRNA(Thr) in a two-step reaction: L-threonine is first activated by ATP to form Thr-AMP and then transferred to the acceptor end of tRNA(Thr). Also edits incorrectly charged L-seryl-tRNA(Thr). This chain is Threonine--tRNA ligase, found in Alkalilimnicola ehrlichii (strain ATCC BAA-1101 / DSM 17681 / MLHE-1).